The following is a 567-amino-acid chain: Proline--tRNA ligase (567 aa).

This sequence belongs to the class-II aminoacyl-tRNA synthetase family. ProS type 1 subfamily. In terms of assembly, homodimer.

The protein localises to the cytoplasm. It catalyses the reaction tRNA(Pro) + L-proline + ATP = L-prolyl-tRNA(Pro) + AMP + diphosphate. Functionally, catalyzes the attachment of proline to tRNA(Pro) in a two-step reaction: proline is first activated by ATP to form Pro-AMP and then transferred to the acceptor end of tRNA(Pro). As ProRS can inadvertently accommodate and process non-cognate amino acids such as alanine and cysteine, to avoid such errors it has two additional distinct editing activities against alanine. One activity is designated as 'pretransfer' editing and involves the tRNA(Pro)-independent hydrolysis of activated Ala-AMP. The other activity is designated 'posttransfer' editing and involves deacylation of mischarged Ala-tRNA(Pro). The misacylated Cys-tRNA(Pro) is not edited by ProRS. This is Proline--tRNA ligase from Staphylococcus aureus (strain MRSA252).